The sequence spans 608 residues: Probable methyltransferase PMT3 (608 aa).

Over 1–12 (MKGRSDGGQKKR) the chain is Cytoplasmic. A helical; Signal-anchor for type II membrane protein transmembrane segment spans residues 13 to 33 (VIALVCVAAVVLVFVYLFYGS). Residues 34-608 (SDHRASAIEY…LTSESLRDME (575 aa)) are Lumenal-facing. An N-linked (GlcNAc...) asparagine glycan is attached at Asn-342.

The protein belongs to the methyltransferase superfamily.

Its subcellular location is the golgi apparatus membrane. This Arabidopsis thaliana (Mouse-ear cress) protein is Probable methyltransferase PMT3.